Here is a 501-residue protein sequence, read N- to C-terminus: Flagellin (501 aa).

The protein belongs to the bacterial flagellin family.

The protein localises to the secreted. It is found in the bacterial flagellum. Functionally, flagellin is the subunit protein which polymerizes to form the filaments of bacterial flagella. The polypeptide is Flagellin (flaA) (Aquifex pyrophilus).